Reading from the N-terminus, the 149-residue chain is Transcriptional repressor NrdR (149 aa).

The segment at 3–34 is a zinc-finger region; that stretch reads CPFCAAVDTKVIDSRLVGDGSQVRRRRQCLVC. The region spanning 49–139 is the ATP-cone domain; the sequence is PRVIKSDEVR…VYRSFEDIRE (91 aa).

This sequence belongs to the NrdR family. Zn(2+) serves as cofactor.

Functionally, negatively regulates transcription of bacterial ribonucleotide reductase nrd genes and operons by binding to NrdR-boxes. This Serratia proteamaculans (strain 568) protein is Transcriptional repressor NrdR.